Consider the following 340-residue polypeptide: Central glycolytic genes regulator (340 aa).

Positions 37–56 (RRSLSASLGISERVLRGEVQ) form a DNA-binding region, H-T-H motif. Residues 149–152 (GGTT), Arg-175, Gln-185, 250–251 (RR), Glu-269, and Lys-310 contribute to the beta-D-fructose 1,6-bisphosphate site.

It belongs to the SorC transcriptional regulatory family. Homotetramer. Binds primarily as a dimer to each half-site of the full-length operator, with much higher affinity for the right site. Then, both dimers interact, bridging the two-half sites of the operator region.

With respect to regulation, stability and function are regulated by the effector molecule fructose-1,6-bisphosphate (FBP). In the presence of glucose, binding of FBP to the low-affinity sugar-binding site of CggR disrupts dimer/dimer bridging interactions and triggers a tetramer to dimer transition, which leaves two physically independent dimers on the target DNA and allows transcription of the downstream coding sequences by the RNA polymerase. In addition, FBP and several other phosphorylated compounds can bind to a high-affinity binding-site and protect CggR against aggregation and proteolysis. Functionally, in the absence of glucose, represses the transcription of the gapA operon, which encodes five key glycolytic enzymes. Binds specifically to the cggR-gapA promoter region and blocks the progression of the RNA polymerase, leading to the arrest of the transcription. In Bacillus subtilis (strain 168), this protein is Central glycolytic genes regulator (cggR).